Consider the following 153-residue polypeptide: Small ribosomal subunit protein uS7c (153 aa).

Belongs to the universal ribosomal protein uS7 family. Part of the 30S ribosomal subunit.

It localises to the plastid. Its function is as follows. One of the primary rRNA binding proteins, it binds directly to 16S rRNA where it nucleates assembly of the head domain of the 30S subunit. The sequence is that of Small ribosomal subunit protein uS7c (rps7) from Helicosporidium sp. subsp. Simulium jonesii (Green alga).